The chain runs to 317 residues: MLQLCPLDEDTLYTHVYERYVELDRHAETLAQDLGIHASDAETLVVDIAPAQPTKSSDTYSLTVSQSLASLRSSTVNNNSTTGYVLWSGTPFFLCWLLYAPSAAPLRDGGRVPVTDSAAQFLQLPPLFSAPARPVCVVELGSGAAGVAAIVLANYVDRYLVSDQKAILKPLRANLLANISEVSRRTVCSKQTPELSSNRRTPARCELELIALDWERIATVPAALRPTDAAHVHVLALDVVYNDFLIPPLLTAIKRLLRWYADEHAVKATAYVLVHLRAQDILQTFLEHAIIDLRLRCYYMDEERLRSSRFALYYVTL.

Residues W87, G141–G143, D163, W214, and L237 contribute to the S-adenosyl-L-methionine site.

Belongs to the class I-like SAM-binding methyltransferase superfamily. RKM5 family.

Its function is as follows. S-adenosyl-L-methionine-dependent protein-lysine N-methyltransferase that methylates 60S ribosomal protein L1. The polypeptide is Ribosomal lysine N-methyltransferase 5 (RKM5) (Eremothecium gossypii (strain ATCC 10895 / CBS 109.51 / FGSC 9923 / NRRL Y-1056) (Yeast)).